A 115-amino-acid polypeptide reads, in one-letter code: U3-lycotoxin-Ls1k (115 aa).

A signal peptide spans 1-20; sequence MKSVLLFGVLLVTLFSYSSA. A propeptide spanning residues 21 to 44 is cleaved from the precursor; that stretch reads EMLDDFDQADEDELLSLIEKEEAR. Cystine bridges form between cysteine 48-cysteine 63, cysteine 55-cysteine 72, cysteine 62-cysteine 87, and cysteine 74-cysteine 85.

The protein belongs to the neurotoxin 19 (CSTX) family. 01 subfamily. Expressed by the venom gland.

Its subcellular location is the secreted. The sequence is that of U3-lycotoxin-Ls1k from Lycosa singoriensis (Wolf spider).